The primary structure comprises 1320 residues: Centrosomin (1320 aa).

Positions 20–41 are disordered; it reads ASFDVPRPPGGGNSPLPSQGRS. The stretch at 97–516 forms a coiled coil; sequence RKTVDVKMEL…SSQEKEIKKL (420 aa). A compositionally biased stretch (basic and acidic residues) spans 517 to 530; it reads NQENEQSANKENDC. The interval 517-554 is disordered; the sequence is NQENEQSANKENDCAKTVISPSSSGRSMSDNEASSQEM. A compositionally biased stretch (polar residues) spans 535–554; the sequence is ISPSSSGRSMSDNEASSQEM. Phosphoserine is present on Ser-545. Coiled coils occupy residues 626-654 and 712-983; these read EADL…KVDV and NSLL…LKLA. The Nuclear localization signal signature appears at 644–656; sequence RNKLLQRKVDVLF. A Phosphothreonine modification is found at Thr-782. A Phosphoserine modification is found at Ser-785. Residues 810 to 823 show a composition bias toward basic and acidic residues; sequence KKELEKRRSSEGQR. Disordered stretches follow at residues 810-849 and 863-893; these read KKEL…SEPD and SNSL…NRNS. Polar residues predominate over residues 831 to 843; that stretch reads LPSQQFDNQSESE. Ser-874, Ser-876, Ser-878, Ser-1191, Ser-1234, Ser-1237, and Ser-1239 each carry phosphoserine. Residues 1220-1249 form a disordered region; the sequence is VEMKTEGSASPKAKSEESTSPDSKSNVATG. Positions 1237-1247 are enriched in polar residues; the sequence is STSPDSKSNVA.

In terms of assembly, monomer. As to expression, developing visceral mesoderm of the midgut, the central and peripheral nervous system, and developing gonads. Isoform J: Expressed in ovaries, testis and embryos. Isoform A: Expressed in testis only.

It localises to the cytoplasm. The protein resides in the cytoskeleton. It is found in the microtubule organizing center. Its subcellular location is the centrosome. The protein localises to the flagellum basal body. It localises to the perinuclear region. Functionally, core component of the centrosome throughout spermatogenesis. May participate in mitotic spindle assembly and the mechanics of morphogenesis through an interaction with microtubules, either directly or indirectly. Is a target of several homeotic genes. The polypeptide is Centrosomin (cnn) (Drosophila melanogaster (Fruit fly)).